The primary structure comprises 103 residues: Putative defensin-like protein 305 (103 aa).

The N-terminal stretch at Met1–Cys31 is a signal peptide. Disulfide bonds link Cys31-Cys51, Cys37-Cys56, and Cys42-Cys58.

This sequence belongs to the DEFL family.

Its subcellular location is the secreted. This chain is Putative defensin-like protein 305, found in Arabidopsis thaliana (Mouse-ear cress).